The sequence spans 373 residues: STE20-related kinase adapter protein alpha (373 aa).

In terms of domain architecture, Protein kinase spans 11-321 (YELLTVIGKG…ASTLLNHSFF (311 aa)). Residues 255–281 (STSRSAANSGLSESLAPSTPRTSNGDS) show a composition bias toward polar residues. The interval 255–288 (STSRSAANSGLSESLAPSTPRTSNGDSPSHPYHR) is disordered. A Phosphothreonine; by LKB1 modification is found at threonine 361.

This sequence belongs to the protein kinase superfamily. STE Ser/Thr protein kinase family. STE20 subfamily. In terms of assembly, component of a trimeric complex composed of STK11/LKB1, STRAD (STRADA or STRADB) and CAB39/MO25 (CAB39/MO25alpha or CAB39L/MO25beta): the complex tethers STK11/LKB1 in the cytoplasm and stimulates its catalytic activity.

It is found in the nucleus. The protein localises to the cytoplasm. Functionally, pseudokinase which, in complex with CAB39/MO25 (CAB39/MO25alpha or CAB39L/MO25beta), binds to and activates STK11/LKB1. Adopts a closed conformation typical of active protein kinases and binds STK11/LKB1 as a pseudosubstrate, promoting conformational change of STK11/LKB1 in an active conformation. The protein is STE20-related kinase adapter protein alpha (STRADA) of Bos taurus (Bovine).